We begin with the raw amino-acid sequence, 608 residues long: Coilin (608 aa).

The segment at 134–272 (KETGGYESES…RKKAKRQWLR (139 aa)) is disordered. Residues 141-155 (SESEEDELEEEAEEF) show a composition bias toward acidic residues. Positions 161–179 (ASKKRKTSSKNQSTKRKKC) are enriched in basic residues. Positions 163–170 (KKRKTSSK) match the Nuclear localization signal 1 motif. Residue S187 is modified to Phosphoserine. Over residues 211–228 (DVQSANNDEQNNDSTKPM) the composition is skewed to polar residues. The segment covering 235-245 (SQQEESKEHND) has biased composition (basic and acidic residues). The short motif at 253 to 260 (TKKTPSRS) is the Nuclear localization signal 2 element. A compositionally biased stretch (basic residues) spans 256 to 269 (TPSRSARRKKAKRQ). One can recognise a Tudor; atypical domain in the interval 410 to 510 (YEQLVAYTGS…LLDVRSVKTS (101 aa)). Residues 513–585 (DSAEVAKSAL…KKGSSSGGSW (73 aa)) form a disordered region. A compositionally biased stretch (low complexity) spans 558–585 (EALSAKKAALSQANNGWNKKGSSSGGSW).

It belongs to the coilin family. In terms of assembly, homooligomer. Interaction with RNA results in multimerization due to structural alteration in the NOD domain.

The protein localises to the nucleus. Its subcellular location is the cajal body. Its function is as follows. Probable component of nuclear coiled bodies, also known as Cajal bodies or CBs, which are involved in the modification and assembly of nucleoplasmic snRNPs. Required for CBs formation. Binds snRNAs and non-specific artificial RNA via the N-terminal part of the NOD domain and via the NLS2 region (212-282) of the IDD domain. The two sites are able to function independently and provide effective RNA-binding in a non-cooperative manner. The sequence is that of Coilin from Arabidopsis thaliana (Mouse-ear cress).